A 615-amino-acid polypeptide reads, in one-letter code: DNA mismatch repair protein MutL (615 aa).

A compositionally biased stretch (low complexity) spans 378–391 (PAPASGSRPAAPWP). The disordered stretch occupies residues 378–397 (PAPASGSRPAAPWPNAQPGY).

It belongs to the DNA mismatch repair MutL/HexB family.

In terms of biological role, this protein is involved in the repair of mismatches in DNA. It is required for dam-dependent methyl-directed DNA mismatch repair. May act as a 'molecular matchmaker', a protein that promotes the formation of a stable complex between two or more DNA-binding proteins in an ATP-dependent manner without itself being part of a final effector complex. The sequence is that of DNA mismatch repair protein MutL from Escherichia coli O127:H6 (strain E2348/69 / EPEC).